Reading from the N-terminus, the 152-residue chain is ARL14 effector protein-like (152 aa).

The interval 1-21 (MNEQSEKNNSIQERHTDHSFP) is disordered.

The sequence is that of ARL14 effector protein-like (ARL14EPL) from Homo sapiens (Human).